Reading from the N-terminus, the 586-residue chain is YTH domain-containing family protein 2 (586 aa).

Disordered regions lie at residues 98 to 128, 141 to 181, and 301 to 464; these read LKEKVKQSRALRQSVNNAAEQQPSTKPQPVQ, SQDQ…KESP, and QGLA…PLVS. Polar residues-rich tracts occupy residues 107-128, 169-181, and 352-368; these read ALRQSVNNAAEQQPSTKPQPVQ, TLPTTPRTIKESP, and SSQAALSCKSKQSTDIQ. The span at 398–418 shows a compositional bias: basic residues; the sequence is CARRHRSSSPRGRSGSHKSRR. A compositionally biased stretch (polar residues) spans 421 to 436; that stretch reads TDSPVSRSTTKSTPSR. In terms of domain architecture, YTH spans 435 to 576; sequence SRARQPGHRD…YCGRDLLRLM (142 aa). Positions 441 to 458 are enriched in basic and acidic residues; sequence GHRDYREYRDDRNRDTKP.

Belongs to the YTHDF family. YTHDF1 subfamily.

Functionally, specifically recognizes and binds N6-methyladenosine (m6A)-containing mRNAs, and regulates their stability. M6A is a modification present at internal sites of mRNAs and some non-coding RNAs and plays a role in mRNA stability and processing. Plays a role in pathogenicity towards plant host. The protein is YTH domain-containing family protein 2 of Pyricularia oryzae (strain 70-15 / ATCC MYA-4617 / FGSC 8958) (Rice blast fungus).